Reading from the N-terminus, the 292-residue chain is 33 kDa chaperonin (292 aa).

2 disulfide bridges follow: cysteine 230–cysteine 232 and cysteine 263–cysteine 266.

It belongs to the HSP33 family. In terms of processing, under oxidizing conditions two disulfide bonds are formed involving the reactive cysteines. Under reducing conditions zinc is bound to the reactive cysteines and the protein is inactive.

It localises to the cytoplasm. Functionally, redox regulated molecular chaperone. Protects both thermally unfolding and oxidatively damaged proteins from irreversible aggregation. Plays an important role in the bacterial defense system toward oxidative stress. The protein is 33 kDa chaperonin of Shigella dysenteriae serotype 1 (strain Sd197).